The primary structure comprises 433 residues: Serine hydroxymethyltransferase (433 aa).

(6S)-5,6,7,8-tetrahydrofolate contacts are provided by residues Leu-131 and 135–137 (GHL). Residue Lys-240 is modified to N6-(pyridoxal phosphate)lysine.

This sequence belongs to the SHMT family. As to quaternary structure, homodimer. Pyridoxal 5'-phosphate is required as a cofactor.

It is found in the cytoplasm. The enzyme catalyses (6R)-5,10-methylene-5,6,7,8-tetrahydrofolate + glycine + H2O = (6S)-5,6,7,8-tetrahydrofolate + L-serine. Its pathway is one-carbon metabolism; tetrahydrofolate interconversion. It functions in the pathway amino-acid biosynthesis; glycine biosynthesis; glycine from L-serine: step 1/1. Functionally, catalyzes the reversible interconversion of serine and glycine with tetrahydrofolate (THF) serving as the one-carbon carrier. This reaction serves as the major source of one-carbon groups required for the biosynthesis of purines, thymidylate, methionine, and other important biomolecules. Also exhibits THF-independent aldolase activity toward beta-hydroxyamino acids, producing glycine and aldehydes, via a retro-aldol mechanism. This chain is Serine hydroxymethyltransferase, found in Bifidobacterium adolescentis (strain ATCC 15703 / DSM 20083 / NCTC 11814 / E194a).